Consider the following 501-residue polypeptide: Glycerol kinase (501 aa).

Residue Thr-17 coordinates ADP. Positions 17, 18, and 19 each coordinate ATP. Thr-17 serves as a coordination point for sn-glycerol 3-phosphate. Residue Arg-21 coordinates ADP. 4 residues coordinate sn-glycerol 3-phosphate: Arg-87, Glu-88, Tyr-139, and Asp-243. Positions 87, 88, 139, 243, and 244 each coordinate glycerol. Residues Thr-265 and Gly-308 each coordinate ADP. Residues Thr-265, Gly-308, Gln-312, and Gly-409 each coordinate ATP. Positions 409 and 413 each coordinate ADP.

The protein belongs to the FGGY kinase family.

The enzyme catalyses glycerol + ATP = sn-glycerol 3-phosphate + ADP + H(+). The protein operates within polyol metabolism; glycerol degradation via glycerol kinase pathway; sn-glycerol 3-phosphate from glycerol: step 1/1. Its activity is regulated as follows. Inhibited by fructose 1,6-bisphosphate (FBP). In terms of biological role, key enzyme in the regulation of glycerol uptake and metabolism. Catalyzes the phosphorylation of glycerol to yield sn-glycerol 3-phosphate. The chain is Glycerol kinase from Pseudomonas fluorescens (strain ATCC BAA-477 / NRRL B-23932 / Pf-5).